Reading from the N-terminus, the 112-residue chain is Thyroid transcription factor 1 (112 aa).

Positions 1–60 (RRNRRVLFSQAQVYELERRFKQQKYLSAPEREHLASMIHLTPTQVKIWFQNHRYKMKRQA) form a DNA-binding region, homeobox. Residues 59–100 (QAKDKAAQQQLQQDSGGGGGGGGAGCPQQQQAQQQSPRRVAV) are disordered. Positions 73–83 (SGGGGGGGGAG) are enriched in gly residues. The span at 84–93 (CPQQQQAQQQ) shows a compositional bias: low complexity.

This sequence belongs to the NK-2 homeobox family. Post-translationally, phosphorylated on serine residues.

It localises to the nucleus. In terms of biological role, transcription factor that binds and activates the promoter of thyroid specific genes such as thyroglobulin, thyroperoxidase, and thyrotropin receptor. Crucial in the maintenance of the thyroid differentiation phenotype. May play a role in lung development and surfactant homeostasis. In Cavia porcellus (Guinea pig), this protein is Thyroid transcription factor 1 (TITF1).